The sequence spans 180 residues: Trafficking protein particle complex subunit 3 (180 aa).

Residue C68 is the site of S-palmitoyl cysteine attachment.

Belongs to the TRAPP small subunits family. BET3 subfamily. Homodimer. Part of the multisubunit TRAPP (transport protein particle) complex.

It is found in the golgi apparatus. It localises to the cis-Golgi network. The protein resides in the endoplasmic reticulum. May play a role in vesicular transport from endoplasmic reticulum to Golgi. The polypeptide is Trafficking protein particle complex subunit 3 (TRAPPC3) (Gallus gallus (Chicken)).